The chain runs to 93 residues: Em protein H2 (93 aa).

Residues 1 to 93 are disordered; sequence MASGQQERSQ…IDESKFKTKS (93 aa). Composition is skewed to basic and acidic residues over residues 9 to 19, 31 to 52, and 73 to 93; these read SQLDRKAREGE, LEAH…REQM, and GGER…KTKS.

Belongs to the small hydrophilic plant seed protein family.

In terms of biological role, it is thought to provide protection for the cytoplasm during the desiccation stage of embryo development. The protein is Em protein H2 (EMH2) of Triticum aestivum (Wheat).